Consider the following 284-residue polypeptide: Tropomyosin (284 aa).

Residues methionine 1–tyrosine 284 are a coiled coil. The span at leucine 113–asparagine 142 shows a compositional bias: basic and acidic residues. The segment at leucine 113–threonine 143 is disordered.

It belongs to the tropomyosin family.

In terms of biological role, tropomyosin, in association with the troponin complex, plays a central role in the calcium dependent regulation of muscle contraction. This Acanthocheilonema viteae (Filarial nematode worm) protein is Tropomyosin.